The following is an 86-amino-acid chain: Large ribosomal subunit protein uL23 (86 aa).

Belongs to the universal ribosomal protein uL23 family. Part of the 50S ribosomal subunit. Contacts protein L29.

In terms of biological role, binds to 23S rRNA. One of the proteins that surrounds the polypeptide exit tunnel on the outside of the ribosome. This chain is Large ribosomal subunit protein uL23, found in Thermococcus sibiricus (strain DSM 12597 / MM 739).